We begin with the raw amino-acid sequence, 179 residues long: Shikimate kinase (179 aa).

15–20 contributes to the ATP binding site; sequence GAGKTS. Position 19 (Thr19) interacts with Mg(2+). Residues Asp37, Arg61, and Gly83 each coordinate substrate. Position 123 (Arg123) interacts with ATP. Arg142 contacts substrate.

Belongs to the shikimate kinase family. As to quaternary structure, monomer. Requires Mg(2+) as cofactor.

It is found in the cytoplasm. It carries out the reaction shikimate + ATP = 3-phosphoshikimate + ADP + H(+). It functions in the pathway metabolic intermediate biosynthesis; chorismate biosynthesis; chorismate from D-erythrose 4-phosphate and phosphoenolpyruvate: step 5/7. Catalyzes the specific phosphorylation of the 3-hydroxyl group of shikimic acid using ATP as a cosubstrate. In Coxiella burnetii (strain CbuG_Q212) (Coxiella burnetii (strain Q212)), this protein is Shikimate kinase.